Consider the following 475-residue polypeptide: Pyruvate kinase (475 aa).

Substrate is bound at residue Arg-36. Residues Asn-38, Ser-40, and Asp-70 each contribute to the K(+) site. 38-41 contacts ATP; sequence NFSH. The ATP site is built by Arg-77 and Lys-158. Mg(2+) is bound at residue Glu-223. Substrate contacts are provided by Gly-246, Asp-247, and Thr-279. Asp-247 serves as a coordination point for Mg(2+).

It belongs to the pyruvate kinase family. As to quaternary structure, homotetramer. It depends on a divalent metal cation as a cofactor.

The enzyme catalyses pyruvate + ATP = phosphoenolpyruvate + ADP + H(+). It participates in carbohydrate degradation; glycolysis; pyruvate from D-glyceraldehyde 3-phosphate: step 5/5. In Thermococcus litoralis (strain ATCC 51850 / DSM 5473 / JCM 8560 / NS-C), this protein is Pyruvate kinase (pki).